The following is a 199-amino-acid chain: Ribosome maturation factor RimM (199 aa).

The region spanning 95-168 (EDEFYHADLV…FVRVDPVAAG (74 aa)) is the PRC barrel domain. Positions 167-199 (AGLVEDEDGDAPREEDFDPKGRPRGPRDAGGNR) are disordered. Residues 176 to 193 (DAPREEDFDPKGRPRGPR) show a composition bias toward basic and acidic residues.

This sequence belongs to the RimM family. Binds ribosomal protein uS19.

The protein localises to the cytoplasm. Functionally, an accessory protein needed during the final step in the assembly of 30S ribosomal subunit, possibly for assembly of the head region. Essential for efficient processing of 16S rRNA. May be needed both before and after RbfA during the maturation of 16S rRNA. It has affinity for free ribosomal 30S subunits but not for 70S ribosomes. The chain is Ribosome maturation factor RimM from Mesorhizobium japonicum (strain LMG 29417 / CECT 9101 / MAFF 303099) (Mesorhizobium loti (strain MAFF 303099)).